We begin with the raw amino-acid sequence, 468 residues long: UDP-N-acetylmuramate--L-alanine ligase (468 aa).

116–122 (GTHGKTT) is an ATP binding site.

It belongs to the MurCDEF family.

The protein resides in the cytoplasm. The catalysed reaction is UDP-N-acetyl-alpha-D-muramate + L-alanine + ATP = UDP-N-acetyl-alpha-D-muramoyl-L-alanine + ADP + phosphate + H(+). Its pathway is cell wall biogenesis; peptidoglycan biosynthesis. Functionally, cell wall formation. This Fusobacterium nucleatum subsp. nucleatum (strain ATCC 25586 / DSM 15643 / BCRC 10681 / CIP 101130 / JCM 8532 / KCTC 2640 / LMG 13131 / VPI 4355) protein is UDP-N-acetylmuramate--L-alanine ligase.